The following is a 221-amino-acid chain: Small ribosomal subunit protein uS2 (221 aa).

The segment at 202-221 is disordered; sequence KVKMPQQNQRGRPQRRFQRR.

It belongs to the universal ribosomal protein uS2 family.

This is Small ribosomal subunit protein uS2 from Methanococcus vannielii (strain ATCC 35089 / DSM 1224 / JCM 13029 / OCM 148 / SB).